The sequence spans 195 residues: TM2 domain-containing protein C41D11.9 (195 aa).

An N-terminal signal peptide occupies residues 1 to 20; that stretch reads MLHKILFLICLASFIPTIGS. Over 21–136 the chain is Extracellular; sequence ISGTKDVKSK…NWSSGYSWTK (116 aa). 3 N-linked (GlcNAc...) asparagine glycosylation sites follow: N55, N93, and N127. The TM2 domain occupies 131 to 179; that stretch reads GYSWTKTMILSVVLGGFGADRFYLGLWKSAIGKLFSFGGLGVWTLVDVV. Residues 137–157 traverse the membrane as a helical segment; it reads TMILSVVLGGFGADRFYLGLW. At 158-163 the chain is on the cytoplasmic side; that stretch reads KSAIGK. Residues 164–184 form a helical membrane-spanning segment; sequence LFSFGGLGVWTLVDVVLIAVG. Residues 185 to 195 are Extracellular-facing; the sequence is YIKPYDGSMYI.

This sequence belongs to the TM2 family.

Its subcellular location is the membrane. The chain is TM2 domain-containing protein C41D11.9 from Caenorhabditis elegans.